Here is a 597-residue protein sequence, read N- to C-terminus: Gigaxonin (597 aa).

Positions 30-99 (CDAHLVLDGE…IFSGQIRLNE (70 aa)) constitute a BTB domain. One can recognise a BACK domain in the interval 134–236 (CIGIRDFALH…DSSYLREQML (103 aa)). Kelch repeat units follow at residues 274–326 (CIVT…SAEG), 327–374 (FLFV…EIDG), 376–421 (LYIL…AMKK), 422–468 (KIYA…GVAM), 470–522 (LYVF…VYGA), and 528–574 (SIYV…AALR).

Interacts with TBCB. Interacts with CUL3. Part of a complex that contains CUL3, RBX1 and GAN. Interacts (via BTB domain) with UBA1. Interacts (via Kelch domains) with MAP1B (via C-terminus) and MAP1S (via C-terminus). Post-translationally, ubiquitinated by E3 ubiquitin ligase complex formed by CUL3 and RBX1 and probably targeted for proteasome-independent degradation. Expressed in brain, heart and muscle (at protein level).

The protein localises to the cytoplasm. The protein resides in the cytoskeleton. It participates in protein modification; protein ubiquitination. In terms of biological role, probable cytoskeletal component that directly or indirectly plays an important role in neurofilament architecture. May act as a substrate-specific adapter of an E3 ubiquitin-protein ligase complex which mediates the ubiquitination and subsequent proteasomal degradation of target proteins. Controls degradation of TBCB. Controls degradation of MAP1B and MAP1S, and is critical for neuronal maintenance and survival. This chain is Gigaxonin, found in Mus musculus (Mouse).